The sequence spans 515 residues: Germ cell-less protein-like 1 (515 aa).

Positions 1–35 (MGSLSSRVLRQPRPALAQQAQGARAGGSARRPDTG) are disordered. The segment covering 11–29 (QPRPALAQQAQGARAGGSA) has biased composition (low complexity). Positions 49–55 (SHKRKRS) match the Nuclear localization signal motif. Positions 65–85 (DSETDEDEEEGDEQQRLLNTP) are disordered. Residue S66 is modified to Phosphoserine. Residues 67 to 76 (ETDEDEEEGD) show a composition bias toward acidic residues. T68 is subject to Phosphothreonine. Positions 85–91 (PRRKKLK) match the Nuclear localization signal motif. The BTB domain occupies 108–178 (SDIKICALGE…LYRDDVLIKP (71 aa)).

As to quaternary structure, interacts with TMPO-beta, TSG101 and TFDP2. Interacts with EMD.

The protein resides in the nucleus matrix. Possible function in spermatogenesis. Enhances the degradation of MDM2 and increases the amount of p53 probably by modulating the nucleocytoplasmic transport. The sequence is that of Germ cell-less protein-like 1 (GMCL1) from Homo sapiens (Human).